A 387-amino-acid polypeptide reads, in one-letter code: Zinc finger protein neuro-d4 (387 aa).

Residues Lys-106, Lys-129, and Lys-133 each participate in a glycyl lysine isopeptide (Lys-Gly) (interchain with G-Cter in SUMO2) cross-link. The C2H2-type zinc finger occupies 195-218 (YVCDICGKRYKNRPGLSYHYTHTH). PHD-type zinc fingers lie at residues 271–328 (NGYC…CKSC) and 325–375 (CKSC…CLRH). Zn(2+) is bound by residues Cys-274, Cys-277, Cys-293, Cys-296, His-301, Cys-304, Cys-322, Cys-325, Cys-328, Cys-331, Cys-343, Cys-346, His-351, Cys-354, Cys-369, and Cys-372.

It belongs to the requiem/DPF family. As to quaternary structure, component of neuron-specific chromatin remodeling complex (nBAF complex) composed of at least, ARID1A/BAF250A or ARID1B/BAF250B, SMARCD1/BAF60A, SMARCD3/BAF60C, SMARCA2/BRM/BAF190B, SMARCA4/BRG1/BAF190A, SMARCB1/BAF47, SMARCC1/BAF155, SMARCE1/BAF57, SMARCC2/BAF170, DPF1/BAF45B, DPF3/BAF45C, ACTL6B/BAF53B and actin. At embryonic stages, predominant expression in the nervous system. Expressed specifically in postmitotic neurons (at protein level).

It localises to the cytoplasm. It is found in the nucleus. May have an important role in developing neurons by participating in regulation of cell survival, possibly as a neurospecific transcription factor. Belongs to the neuron-specific chromatin remodeling complex (nBAF complex). During neural development a switch from a stem/progenitor to a postmitotic chromatin remodeling mechanism occurs as neurons exit the cell cycle and become committed to their adult state. The transition from proliferating neural stem/progenitor cells to postmitotic neurons requires a switch in subunit composition of the npBAF and nBAF complexes. As neural progenitors exit mitosis and differentiate into neurons, npBAF complexes which contain ACTL6A/BAF53A and PHF10/BAF45A, are exchanged for homologous alternative ACTL6B/BAF53B and DPF1/BAF45B or DPF3/BAF45C subunits in neuron-specific complexes (nBAF). The npBAF complex is essential for the self-renewal/proliferative capacity of the multipotent neural stem cells. The nBAF complex along with CREST plays a role regulating the activity of genes essential for dendrite growth. The sequence is that of Zinc finger protein neuro-d4 from Mus musculus (Mouse).